The following is a 459-amino-acid chain: Kelch-like protein terF (459 aa).

Kelch repeat units lie at residues 92-144 (STVV…LVGD), 145-196 (EIFV…VVDG), 198-248 (IYYL…TVVV), 251-304 (TIYL…IYRD), 306-354 (LYIL…TIGS), and 355-405 (LIFT…VYKG).

It participates in secondary metabolite biosynthesis. In terms of biological role, kelch-like protein; part of the gene cluster that mediates the biosynthesis of terrein, a fungal metabolite with ecological, antimicrobial, antiproliferative, and antioxidative activities. The first step in the pathway is performed by the polyketide synthase terA that produces 4-hydroxy-6-methylpyranon (4-HMP), orsellinic acid (OA), and 2,3-dehydro-6-hydroxymellein (2,3-dehydro-6-HM) by condensing acetyl-CoA with two, three, or four malonyl-CoA units, respectively. 4-HMP and OA are not pathway intermediates, but are rather shunt or side products. 2,3-dehydro-6-HM is further converted to 6-hydroxymellein (6-HM) by the 6-hydroxymellein synthase terB. The monooxygenases terC and terD, the multicopper oxidase terE and the Kelch-like protein terF are then involved in the transformation of 6-HM to terrein. Even if they are co-regulated with the other terrein cluster genes, terH and terI seem to be dispensable for terrein production; whereas one or both of the 2 transporters terG and terJ are probably required for efficient secretion of metabolites. The sequence is that of Kelch-like protein terF from Aspergillus terreus (strain NIH 2624 / FGSC A1156).